A 318-amino-acid polypeptide reads, in one-letter code: Thymidylate synthase (318 aa).

Residues arginine 26 and arginine 181–arginine 182 each bind dUMP. Cysteine 201 functions as the Nucleophile in the catalytic mechanism. DUMP contacts are provided by residues arginine 221–aspartate 224, asparagine 232, and histidine 262–tyrosine 264. Aspartate 224 provides a ligand contact to (6R)-5,10-methylene-5,6,7,8-tetrahydrofolate. Residue alanine 317 participates in (6R)-5,10-methylene-5,6,7,8-tetrahydrofolate binding.

This sequence belongs to the thymidylate synthase family. Bacterial-type ThyA subfamily. As to quaternary structure, homodimer.

The protein resides in the cytoplasm. The enzyme catalyses dUMP + (6R)-5,10-methylene-5,6,7,8-tetrahydrofolate = 7,8-dihydrofolate + dTMP. Its pathway is pyrimidine metabolism; dTTP biosynthesis. Functionally, catalyzes the reductive methylation of 2'-deoxyuridine-5'-monophosphate (dUMP) to 2'-deoxythymidine-5'-monophosphate (dTMP) while utilizing 5,10-methylenetetrahydrofolate (mTHF) as the methyl donor and reductant in the reaction, yielding dihydrofolate (DHF) as a by-product. This enzymatic reaction provides an intracellular de novo source of dTMP, an essential precursor for DNA biosynthesis. This Staphylococcus haemolyticus (strain JCSC1435) protein is Thymidylate synthase.